The primary structure comprises 245 residues: tRNA (guanine-N(1)-)-methyltransferase (245 aa).

S-adenosyl-L-methionine is bound by residues Gly113 and 133–138 (IGDYVL).

This sequence belongs to the RNA methyltransferase TrmD family. In terms of assembly, homodimer.

It localises to the cytoplasm. It carries out the reaction guanosine(37) in tRNA + S-adenosyl-L-methionine = N(1)-methylguanosine(37) in tRNA + S-adenosyl-L-homocysteine + H(+). Functionally, specifically methylates guanosine-37 in various tRNAs. This Anoxybacillus flavithermus (strain DSM 21510 / WK1) protein is tRNA (guanine-N(1)-)-methyltransferase.